Here is a 160-residue protein sequence, read N- to C-terminus: Cytochrome c-type biogenesis protein CcmE (160 aa).

Topologically, residues Met1–Arg8 are cytoplasmic. Residues Leu9–Ala29 form a helical; Signal-anchor for type II membrane protein membrane-spanning segment. Residues Leu30–Gln160 are Periplasmic-facing. Residues His130 and Tyr134 each coordinate heme.

Belongs to the CcmE/CycJ family.

Its subcellular location is the cell inner membrane. Heme chaperone required for the biogenesis of c-type cytochromes. Transiently binds heme delivered by CcmC and transfers the heme to apo-cytochromes in a process facilitated by CcmF and CcmH. This is Cytochrome c-type biogenesis protein CcmE from Idiomarina loihiensis (strain ATCC BAA-735 / DSM 15497 / L2-TR).